Here is a 766-residue protein sequence, read N- to C-terminus: Dolichyl pyrophosphate Glc1Man9GlcNAc2 alpha-1,3-glucosyltransferase (766 aa).

Helical transmembrane passes span Leu6–Val26, Tyr60–Phe80, Ile96–Ala116, Ser156–Ile176, Ile190–Leu210, Ala228–His248, Pro324–Ile344, Ala350–Val370, Ile395–Phe415, Ile423–Leu443, Val452–Leu472, and Leu482–Trp502.

It belongs to the ALG6/ALG8 glucosyltransferase family.

The protein resides in the endoplasmic reticulum membrane. The enzyme catalyses an alpha-D-Glc-(1-&gt;3)-alpha-D-Man-(1-&gt;2)-alpha-D-Man-(1-&gt;2)-alpha-D-Man-(1-&gt;3)-[alpha-D-Man-(1-&gt;2)-alpha-D-Man-(1-&gt;3)-[alpha-D-Man-(1-&gt;2)-alpha-D-Man-(1-&gt;6)]-alpha-D-Man-(1-&gt;6)]-beta-D-Man-(1-&gt;4)-beta-D-GlcNAc-(1-&gt;4)-alpha-D-GlcNAc-diphospho-di-trans,poly-cis-dolichol + a di-trans,poly-cis-dolichyl beta-D-glucosyl phosphate = an alpha-D-Glc-(1-&gt;3)-alpha-D-Glc-(1-&gt;3)-alpha-D-Man-(1-&gt;2)-alpha-D-Man-(1-&gt;2)-alpha-D-Man-(1-&gt;3)-[alpha-D-Man-(1-&gt;2)-alpha-D-Man-(1-&gt;3)-[alpha-D-Man-(1-&gt;2)-alpha-D-Man-(1-&gt;6)]-alpha-D-Man-(1-&gt;6)]-beta-D-Man-(1-&gt;4)-beta-D-GlcNAc-(1-&gt;4)-alpha-D-GlcNAc-diphospho-di-trans,poly-cis-dolichol + a di-trans,poly-cis-dolichyl phosphate + H(+). It participates in protein modification; protein glycosylation. In terms of biological role, dolichyl pyrophosphate Glc1Man9GlcNAc2 alpha-1,3-glucosyltransferase that operates in the biosynthetic pathway of dolichol-linked oligosaccharides, the glycan precursors employed in protein asparagine (N)-glycosylation. The assembly of dolichol-linked oligosaccharides begins on the cytosolic side of the endoplasmic reticulum membrane and finishes in its lumen. The sequential addition of sugars to dolichol pyrophosphate produces dolichol-linked oligosaccharides containing fourteen sugars, including two GlcNAcs, nine mannoses and three glucoses. Once assembled, the oligosaccharide is transferred from the lipid to nascent proteins by oligosaccharyltransferases. In the lumen of the endoplasmic reticulum, adds the second glucose residue from dolichyl phosphate glucose (Dol-P-Glc) onto the lipid-linked oligosaccharide intermediate Glc(1)Man(9)GlcNAc(2)-PP-Dol to produce Glc(2)Man(9)GlcNAc(2)-PP-Dol. This chain is Dolichyl pyrophosphate Glc1Man9GlcNAc2 alpha-1,3-glucosyltransferase, found in Caenorhabditis elegans.